Here is a 285-residue protein sequence, read N- to C-terminus: Steroidogenic acute regulatory protein, mitochondrial (285 aa).

The transit peptide at 1-63 directs the protein to the mitochondrion; sequence MLLATFKLCA…RQSSLLGSQL (63 aa). A phosphoserine; by PKA mark is found at Ser-57 and Ser-195. One can recognise an START domain in the interval 67-280; sequence LYSDQELAYI…LRKRLESSPA (214 aa).

In terms of assembly, may interact with TSPO.

The protein resides in the mitochondrion. The catalysed reaction is cholesterol(in) = cholesterol(out). The protein operates within steroid metabolism; cholesterol metabolism. Plays a key role in steroid hormone synthesis by enhancing the metabolism of cholesterol into pregnenolone. Mediates the transfer of cholesterol from the outer mitochondrial membrane to the inner mitochondrial membrane where it is cleaved to pregnenolone. This is Steroidogenic acute regulatory protein, mitochondrial (STAR) from Equus caballus (Horse).